Reading from the N-terminus, the 276-residue chain is Dermonecrotic toxin LlSicTox-alphaIV2ii (276 aa).

H5 is an active-site residue. The Mg(2+) site is built by E25 and D27. The active-site Nucleophile is H41. Cystine bridges form between C45–C51 and C47–C193. Residue D85 coordinates Mg(2+).

This sequence belongs to the arthropod phospholipase D family. Class II subfamily. It depends on Mg(2+) as a cofactor. In terms of tissue distribution, expressed by the venom gland.

It is found in the secreted. The catalysed reaction is an N-(acyl)-sphingosylphosphocholine = an N-(acyl)-sphingosyl-1,3-cyclic phosphate + choline. It catalyses the reaction an N-(acyl)-sphingosylphosphoethanolamine = an N-(acyl)-sphingosyl-1,3-cyclic phosphate + ethanolamine. The enzyme catalyses a 1-acyl-sn-glycero-3-phosphocholine = a 1-acyl-sn-glycero-2,3-cyclic phosphate + choline. It carries out the reaction a 1-acyl-sn-glycero-3-phosphoethanolamine = a 1-acyl-sn-glycero-2,3-cyclic phosphate + ethanolamine. In terms of biological role, dermonecrotic toxins cleave the phosphodiester linkage between the phosphate and headgroup of certain phospholipids (sphingolipid and lysolipid substrates), forming an alcohol (often choline) and a cyclic phosphate. This toxin acts on sphingomyelin (SM). It may also act on ceramide phosphoethanolamine (CPE), lysophosphatidylcholine (LPC) and lysophosphatidylethanolamine (LPE), but not on lysophosphatidylserine (LPS), and lysophosphatidylglycerol (LPG). It acts by transphosphatidylation, releasing exclusively cyclic phosphate products as second products. Induces dermonecrosis, hemolysis, increased vascular permeability, edema, inflammatory response, and platelet aggregation. The polypeptide is Dermonecrotic toxin LlSicTox-alphaIV2ii (Loxosceles laeta (South American recluse spider)).